We begin with the raw amino-acid sequence, 223 residues long: Cytidylate kinase (223 aa).

12–20 (GPSGVGKGT) is an ATP binding site.

This sequence belongs to the cytidylate kinase family. Type 1 subfamily.

The protein localises to the cytoplasm. It carries out the reaction CMP + ATP = CDP + ADP. The catalysed reaction is dCMP + ATP = dCDP + ADP. This Xylella fastidiosa (strain M23) protein is Cytidylate kinase.